The primary structure comprises 309 residues: Ecto-ADP-ribosyltransferase 5 (309 aa).

An N-terminal signal peptide occupies residues 1–23; the sequence is MILEDLLMVLSCLSLHALWKVRA. Cys43 and Cys259 are disulfide-bonded. Residues 63–253 enclose the TR mART core domain; the sequence is ALLRESWEAA…IVTLWSYDQT (191 aa). Residue Tyr100 participates in NAD(+) binding. Asn102 is a glycosylation site (N-linked (GlcNAc...) asparagine). Residues Arg161 and Gln181 each contribute to the NAD(+) site. Residue Arg161 is part of the active site. The active site involves Ser184. N-linked (GlcNAc...) asparagine glycosylation occurs at Asn197. Ser215 serves as a coordination point for NAD(+). The active site involves Glu222.

The protein belongs to the Arg-specific ADP-ribosyltransferase family. As to expression, abundantly expressed in testis. Lower levels in cardiac and skeletal muscle.

It localises to the secreted. It is found in the membrane. It carries out the reaction L-arginyl-[protein] + NAD(+) = N(omega)-(ADP-D-ribosyl)-L-arginyl-[protein] + nicotinamide + H(+). In Mus musculus (Mouse), this protein is Ecto-ADP-ribosyltransferase 5 (Art5).